Here is a 58-residue protein sequence, read N- to C-terminus: Small ribosomal subunit protein bS21B (58 aa).

It belongs to the bacterial ribosomal protein bS21 family.

This is Small ribosomal subunit protein bS21B from Trichormus variabilis (strain ATCC 29413 / PCC 7937) (Anabaena variabilis).